Reading from the N-terminus, the 468-residue chain is UDP-N-acetylmuramate--L-alanine ligase (468 aa).

112–118 is an ATP binding site; it reads GMHGKTT.

It belongs to the MurCDEF family.

The protein resides in the cytoplasm. It catalyses the reaction UDP-N-acetyl-alpha-D-muramate + L-alanine + ATP = UDP-N-acetyl-alpha-D-muramoyl-L-alanine + ADP + phosphate + H(+). The protein operates within cell wall biogenesis; peptidoglycan biosynthesis. Its function is as follows. Cell wall formation. The protein is UDP-N-acetylmuramate--L-alanine ligase of Koribacter versatilis (strain Ellin345).